The chain runs to 77 residues: DinI-like protein in retron Ec67 (77 aa).

It belongs to the DinI family.

This Escherichia coli protein is DinI-like protein in retron Ec67.